The primary structure comprises 222 residues: Glutathione S-transferase alpha-4 (222 aa).

Methionine 1 carries the post-translational modification N-acetylmethionine. Positions 3 to 83 constitute a GST N-terminal domain; it reads VKPKLYYFQG…YLAAKYNLYG (81 aa). Residues tyrosine 9, 54–55, and 67–68 contribute to the glutathione site; these read QV and QT. Residues 85–208 enclose the GST C-terminal domain; it reads DLKERVRIDM…QPGSQRKPPP (124 aa).

The protein belongs to the GST superfamily. Alpha family. Homodimer.

The protein resides in the cytoplasm. The catalysed reaction is RX + glutathione = an S-substituted glutathione + a halide anion + H(+). Its function is as follows. Conjugation of reduced glutathione to a wide number of exogenous and endogenous hydrophobic electrophiles. In Rattus norvegicus (Rat), this protein is Glutathione S-transferase alpha-4 (Gsta4).